We begin with the raw amino-acid sequence, 602 residues long: Pro-neuregulin-1, membrane-bound isoform (602 aa).

At 1–206 (MWATSEGPLQ…MEAEELYQKR (206 aa)) the chain is on the extracellular side. Asn21 is a glycosylation site (N-linked (GlcNAc...) asparagine). The region spanning 29-123 (PKLKEMKNQE…DSTKASVIIT (95 aa)) is the Ig-like C2-type domain. Cys49 and Cys105 form a disulfide bridge. N-linked (GlcNAc...) asparagine glycans are attached at residues Asn113 and Asn126. Residues 137–181 (HLTKCDIKQKAFCVNGGECYMVKDLPNPPRYLCRCPNEFTGDRCQ) enclose the EGF-like domain. Intrachain disulfides connect Cys141–Cys155, Cys149–Cys169, and Cys171–Cys180. Residues 207 to 229 (VLTITGICIALLVVGIMCVVAYC) traverse the membrane as a helical segment. Over 230–602 (KTKKQRKKLH…VIANQDPIAV (373 aa)) the chain is Cytoplasmic. Disordered regions lie at residues 293 to 366 (ETSF…EGNS), 391 to 421 (MTTP…PVSS), 460 to 479 (FNSF…PSPL), and 486 to 553 (EYET…FLSI). Positions 294–314 (TSFSTSHYTSTTHHSMTVTQT) are enriched in low complexity. Residues 315 to 324 (PSHSWSNGHT) show a composition bias toward polar residues. Residues 325-341 (ESILSESHSVLVSSSVE) show a composition bias toward low complexity. A compositionally biased stretch (polar residues) spans 460–474 (FNSFHNNPTHESNSL). Basic residues predominate over residues 504-514 (TNSRRVKRTKP). Residues 527 to 536 (DTSSQSTSSE) show a composition bias toward low complexity.

Belongs to the neuregulin family. Post-translationally, proteolytic cleavage close to the plasma membrane on the external face leads to the release of the soluble growth factor form. Extensive glycosylation precedes the proteolytic cleavage.

It localises to the cell membrane. The protein localises to the secreted. Its function is as follows. Direct ligand for the ERBB tyrosine kinase receptors. The multiple isoforms perform diverse functions: cysteine-rich domain containing isoforms (isoform 2-isoform 4) probably regulate the expression of nicotinic acetylcholine receptors at developing interneuronal synapses. Isoform Ig-NRG is required for the initial induction and/or maintenance of the mature levels of acetylcholine receptors at neuromuscular synapses. Binds to ERBB3 and integrins to form a complex which is essential for NRG1-ERBB signaling. This Gallus gallus (Chicken) protein is Pro-neuregulin-1, membrane-bound isoform (NRG1).